The primary structure comprises 96 residues: Small ribosomal subunit protein bS6 (96 aa).

The protein belongs to the bacterial ribosomal protein bS6 family.

Binds together with bS18 to 16S ribosomal RNA. The polypeptide is Small ribosomal subunit protein bS6 (Natranaerobius thermophilus (strain ATCC BAA-1301 / DSM 18059 / JW/NM-WN-LF)).